The chain runs to 433 residues: Tol-Pal system protein TolB (433 aa).

Positions methionine 1–alanine 21 are cleaved as a signal peptide.

The protein belongs to the TolB family. In terms of assembly, the Tol-Pal system is composed of five core proteins: the inner membrane proteins TolA, TolQ and TolR, the periplasmic protein TolB and the outer membrane protein Pal. They form a network linking the inner and outer membranes and the peptidoglycan layer.

It is found in the periplasm. In terms of biological role, part of the Tol-Pal system, which plays a role in outer membrane invagination during cell division and is important for maintaining outer membrane integrity. The chain is Tol-Pal system protein TolB from Pseudomonas putida (strain ATCC 47054 / DSM 6125 / CFBP 8728 / NCIMB 11950 / KT2440).